Here is a 376-residue protein sequence, read N- to C-terminus: uncharacterized protein (376 aa).

It belongs to the glycosyltransferase 28 family.

This is an uncharacterized protein from Methanosarcina mazei (strain ATCC BAA-159 / DSM 3647 / Goe1 / Go1 / JCM 11833 / OCM 88) (Methanosarcina frisia).